A 941-amino-acid polypeptide reads, in one-letter code: Isoleucine--tRNA ligase (941 aa).

A 'HIGH' region motif is present at residues 58-68 (PYANGDIHIGH). Glutamate 562 contributes to the L-isoleucyl-5'-AMP binding site. The short motif at 603–607 (KMSKS) is the 'KMSKS' region element. An ATP-binding site is contributed by lysine 606. Positions 904, 907, 924, and 927 each coordinate Zn(2+).

The protein belongs to the class-I aminoacyl-tRNA synthetase family. IleS type 1 subfamily. In terms of assembly, monomer. Zn(2+) is required as a cofactor.

It localises to the cytoplasm. It catalyses the reaction tRNA(Ile) + L-isoleucine + ATP = L-isoleucyl-tRNA(Ile) + AMP + diphosphate. Functionally, catalyzes the attachment of isoleucine to tRNA(Ile). As IleRS can inadvertently accommodate and process structurally similar amino acids such as valine, to avoid such errors it has two additional distinct tRNA(Ile)-dependent editing activities. One activity is designated as 'pretransfer' editing and involves the hydrolysis of activated Val-AMP. The other activity is designated 'posttransfer' editing and involves deacylation of mischarged Val-tRNA(Ile). The chain is Isoleucine--tRNA ligase from Alkalilimnicola ehrlichii (strain ATCC BAA-1101 / DSM 17681 / MLHE-1).